Here is a 466-residue protein sequence, read N- to C-terminus: Probable multidrug resistance protein NorM (466 aa).

The next 11 helical transmembrane spans lie at 68-90 (AHTV…SPLV), 110-132 (LWVA…HILI), 142-164 (ALAQ…FIAL), 177-199 (PLWI…IHGL), 209-231 (GAGL…IAAW), 251-273 (LVRQ…YGLF), 288-310 (LAAH…GIGM), 331-353 (AGLV…IILG), 368-387 (SAAT…TFFI), 407-429 (MTLA…VLAF), and 433-455 (LGAV…LLVL).

Belongs to the multi antimicrobial extrusion (MATE) (TC 2.A.66.1) family.

It localises to the cell inner membrane. Its function is as follows. Multidrug efflux pump. The sequence is that of Probable multidrug resistance protein NorM (norM) from Bradyrhizobium diazoefficiens (strain JCM 10833 / BCRC 13528 / IAM 13628 / NBRC 14792 / USDA 110).